The following is a 481-amino-acid chain: Coniferyl aldehyde dehydrogenase (481 aa).

Residues E221 and C255 contribute to the active site.

It belongs to the aldehyde dehydrogenase family. Homodimer.

The catalysed reaction is (E)-coniferaldehyde + NADP(+) + H2O = (E)-ferulate + NADPH + 2 H(+). It catalyses the reaction (E)-coniferaldehyde + NAD(+) + H2O = (E)-ferulate + NADH + 2 H(+). Catalyzes the NAD(+)-dependent oxidation of coniferyl aldehyde to ferulic acid and which is induced during growth with eugenol as the carbon source. In Pseudomonas sp. (strain HR199 / DSM 7063), this protein is Coniferyl aldehyde dehydrogenase (calB).